The sequence spans 325 residues: Cytochrome c1, heme protein, mitochondrial (325 aa).

Residues 1–84 constitute a mitochondrion transit peptide; it reads MAAAAATLRG…AVALHSAVSA (84 aa). Over 85 to 281 the chain is Mitochondrial intermembrane; it reads SDLELHPPSY…TFLRWAAEPE (197 aa). The Cytochrome c domain maps to 108 to 209; it reads TSIRRGFQVY…IVRARHGGED (102 aa). The heme c site is built by C121, C124, H125, and M244. The chain crosses the membrane as a helical span at residues 282–315; sequence HDHRKRMGLKMLLMMGLLLPLVYAMKRHKWSVLK. Residues 316 to 325 lie on the Mitochondrial matrix side of the membrane; sequence SRKLAYRPPK.

Belongs to the cytochrome c family. As to quaternary structure, component of the ubiquinol-cytochrome c oxidoreductase (cytochrome b-c1 complex, complex III, CIII), a multisubunit enzyme composed of 11 subunits. The complex is composed of 3 respiratory subunits cytochrome b, cytochrome c1 and Rieske protein UQCRFS1, 2 core protein subunits UQCRC1/QCR1 and UQCRC2/QCR2, and 6 low-molecular weight protein subunits UQCRH/QCR6, UQCRB/QCR7, UQCRQ/QCR8, UQCR10/QCR9, UQCR11/QCR10 and subunit 9, the cleavage product of Rieske protein UQCRFS1. The complex exists as an obligatory dimer and forms supercomplexes (SCs) in the inner mitochondrial membrane with NADH-ubiquinone oxidoreductase (complex I, CI) and cytochrome c oxidase (complex IV, CIV), resulting in different assemblies (supercomplex SCI(1)III(2)IV(1) and megacomplex MCI(2)III(2)IV(2)). Interacts with FLVCR2; this interaction occurs in the absence of heme and is disrupted upon heme binding. Requires heme c as cofactor.

The protein resides in the mitochondrion inner membrane. It catalyses the reaction a quinol + 2 Fe(III)-[cytochrome c](out) = a quinone + 2 Fe(II)-[cytochrome c](out) + 2 H(+)(out). Component of the ubiquinol-cytochrome c oxidoreductase, a multisubunit transmembrane complex that is part of the mitochondrial electron transport chain which drives oxidative phosphorylation. The respiratory chain contains 3 multisubunit complexes succinate dehydrogenase (complex II, CII), ubiquinol-cytochrome c oxidoreductase (cytochrome b-c1 complex, complex III, CIII) and cytochrome c oxidase (complex IV, CIV), that cooperate to transfer electrons derived from NADH and succinate to molecular oxygen, creating an electrochemical gradient over the inner membrane that drives transmembrane transport and the ATP synthase. The cytochrome b-c1 complex catalyzes electron transfer from ubiquinol to cytochrome c, linking this redox reaction to translocation of protons across the mitochondrial inner membrane, with protons being carried across the membrane as hydrogens on the quinol. In the process called Q cycle, 2 protons are consumed from the matrix, 4 protons are released into the intermembrane space and 2 electrons are passed to cytochrome c. Cytochrome c1 is a catalytic core subunit containing a c-type heme. It transfers electrons from the [2Fe-2S] iron-sulfur cluster of the Rieske protein to cytochrome c. The polypeptide is Cytochrome c1, heme protein, mitochondrial (CYC1) (Bos taurus (Bovine)).